The chain runs to 468 residues: Methionine aminopeptidase 2 (468 aa).

Residues 1 to 10 are compositionally biased toward basic and acidic residues; that stretch reads MGSKTFEGEG. The disordered stretch occupies residues 1 to 106; it reads MGSKTFEGEG…PPRVPLDDLF (106 aa). The segment covering 16–25 has biased composition (polar residues); sequence DPSNSTSPNS. Over residues 31–40 the composition is skewed to basic and acidic residues; the sequence is RGAHLSRDGD. Over residues 46–56 the composition is skewed to acidic residues; that stretch reads GDGDDGADGDE. Residues 61–75 are compositionally biased toward polar residues; the sequence is VTTTPLTEQQPSSET. The segment covering 78–90 has biased composition (basic residues); that stretch reads KKKKRRKPKKKIS. A substrate-binding site is contributed by histidine 219. Residues aspartate 240, aspartate 251, and histidine 320 each coordinate a divalent metal cation. Substrate is bound at residue histidine 328. 2 residues coordinate a divalent metal cation: glutamate 353 and glutamate 449.

This sequence belongs to the peptidase M24A family. Methionine aminopeptidase eukaryotic type 2 subfamily. The cofactor is Co(2+). Zn(2+) serves as cofactor. Mn(2+) is required as a cofactor. It depends on Fe(2+) as a cofactor.

It is found in the cytoplasm. It carries out the reaction Release of N-terminal amino acids, preferentially methionine, from peptides and arylamides.. Cotranslationally removes the N-terminal methionine from nascent proteins. The N-terminal methionine is often cleaved when the second residue in the primary sequence is small and uncharged (Met-Ala-, Cys, Gly, Pro, Ser, Thr, or Val). This is Methionine aminopeptidase 2 from Aspergillus oryzae (strain ATCC 42149 / RIB 40) (Yellow koji mold).